The primary structure comprises 224 residues: Cytidylate kinase (224 aa).

12 to 20 (GPAGAGKST) contacts ATP.

The protein belongs to the cytidylate kinase family. Type 1 subfamily.

It is found in the cytoplasm. It carries out the reaction CMP + ATP = CDP + ADP. It catalyses the reaction dCMP + ATP = dCDP + ADP. The sequence is that of Cytidylate kinase from Caldanaerobacter subterraneus subsp. tengcongensis (strain DSM 15242 / JCM 11007 / NBRC 100824 / MB4) (Thermoanaerobacter tengcongensis).